Consider the following 291-residue polypeptide: MAGTKEIRTKIKSVQNTRKITKAMEMVAASKMRKAQERMRSARPYAEKVRNIAAHLATANPEFKHPFMQEREVKRVGMIVVTTDKGLCGGLNTNVLRAVTNELKTLQGRGVDVQATAIGTKGMQFLGRVGAKVISHVVHLGDTPHLEKLIGAIKVQLDAFTNGEVDAVYLAYTKFINTMKQEPMVEQLLPLAADKLVQTEEEKRAYSWDYIYEPDAQTVVEELLVRYVEALVYQAVAENMASEQSARMVAMKAASDNAKNVIGELQLVYNKTRQAAITKELSEIVSGAAAV.

Belongs to the ATPase gamma chain family. F-type ATPases have 2 components, CF(1) - the catalytic core - and CF(0) - the membrane proton channel. CF(1) has five subunits: alpha(3), beta(3), gamma(1), delta(1), epsilon(1). CF(0) has three main subunits: a, b and c.

It localises to the cell inner membrane. Produces ATP from ADP in the presence of a proton gradient across the membrane. The gamma chain is believed to be important in regulating ATPase activity and the flow of protons through the CF(0) complex. This is ATP synthase gamma chain from Cupriavidus necator (strain ATCC 17699 / DSM 428 / KCTC 22496 / NCIMB 10442 / H16 / Stanier 337) (Ralstonia eutropha).